Here is a 332-residue protein sequence, read N- to C-terminus: Glycerol-3-phosphate dehydrogenase [NAD(P)+] (332 aa).

3 residues coordinate NADPH: Trp-13, Lys-34, and Lys-108. Sn-glycerol 3-phosphate-binding residues include Lys-108, Gly-136, and Ser-138. Ala-140 is an NADPH binding site. Sn-glycerol 3-phosphate-binding residues include Lys-191, Asp-244, Ser-254, Arg-255, and Asn-256. Lys-191 acts as the Proton acceptor in catalysis. Arg-255 contacts NADPH. Residues Val-279 and Glu-281 each coordinate NADPH.

It belongs to the NAD-dependent glycerol-3-phosphate dehydrogenase family.

The protein localises to the cytoplasm. The catalysed reaction is sn-glycerol 3-phosphate + NAD(+) = dihydroxyacetone phosphate + NADH + H(+). It catalyses the reaction sn-glycerol 3-phosphate + NADP(+) = dihydroxyacetone phosphate + NADPH + H(+). The protein operates within membrane lipid metabolism; glycerophospholipid metabolism. In terms of biological role, catalyzes the reduction of the glycolytic intermediate dihydroxyacetone phosphate (DHAP) to sn-glycerol 3-phosphate (G3P), the key precursor for phospholipid synthesis. The protein is Glycerol-3-phosphate dehydrogenase [NAD(P)+] of Francisella tularensis subsp. novicida (strain U112).